An 883-amino-acid polypeptide reads, in one-letter code: Pyruvate, phosphate dikinase 2 (883 aa).

Positions 1–21 (MAPAPCGRSSQRVFHFGKGKS) are disordered. H465 acts as the Tele-phosphohistidine intermediate in catalysis. Substrate contacts are provided by R571, R628, E757, G778, T779, N780, and D781. Mg(2+) is bound at residue E757. Mg(2+) is bound at residue D781. The active-site Proton donor is the C843.

This sequence belongs to the PEP-utilizing enzyme family. Mg(2+) serves as cofactor. Expressed in leaves, roots and stems.

The protein localises to the cytoplasm. It carries out the reaction pyruvate + phosphate + ATP = phosphoenolpyruvate + AMP + diphosphate + H(+). Functionally, formation of phosphoenolpyruvate, which is the primary acceptor of CO(2) in C4 and some Crassulacean acid metabolism plants. This Zea mays (Maize) protein is Pyruvate, phosphate dikinase 2.